The primary structure comprises 739 residues: MGTSVQVTPLCGVYNENPLSYLVSIDGFNFLIDCGWNDLFDTSLLEPLSRVASTIDAVLLSHPDTLHIGALPYAMKQLGLSAPVYATEPVHRLGLLTMYDQFLSRKQVSDFDLFTLDDIDSAFQNVIRLTYSQNYHLSGKGEGIVIAPHVAGHMLGGSIWRITKDGEDVIYAVDYNHRKERHLNGTVLQSFVRPAVLITDAYHALYTNQTARQQRDKEFLDTISKHLEVGGNVLLPVDTAGRVLELLLILEQHWSQRGFSFPIYFLTYVSSSTIDYVKSFLEWMSDSISKSFETSRDNAFLLRHVTLLINKTDLDNAPPGPKVVLASMASLEAGFAREIFVEWANDPRNLVLFTETGQFGTLARMLQSAPPPKFVKVTMSKRVPLAGEELIAYEEEQNRLKREEALRASLVKEEETKASHGSDDNSSEPMIIDTKTTHDVIGSHGPAYKDILIDGFVPPSSSVAPMFPYYDNTSEWDDFGEIINPDDYVIKDEDMDRGAMHNGGDVDGRLDEATASLMLDTRPSKVMSNELIVTVSCSLVKMDYEGRSDGRSIKSMIAHVSPLKLVLVHAIAEATEHLKQHCLNNICPHVYAPQIEETVDVTSDLCAYKVQLSEKLMSNVIFKKLGDSEVAWVDSEVGKTERDMRSLLPMPGAASPHKPVLVGDLKIADFKQFLSSKGVQVEFAGGGALRCGEYVTLRKVGPTGQKGGASGPQQILIEGPLCEDYYKIRDYLYSQFYLL.

The segment covering 411-423 (VKEEETKASHGSD) has biased composition (basic and acidic residues). A disordered region spans residues 411–430 (VKEEETKASHGSDDNSSEPM).

Belongs to the metallo-beta-lactamase superfamily. RNA-metabolizing metallo-beta-lactamase-like family. CPSF2/YSH1 subfamily. Component of the CPSF complex, at least composed of CPSF160, CPSF100, CPSF73-I, CPSF73-II, CPSF30, FY and FIPS5. Forms a complex with cleavage and polyadenylation specificity factor (CPSF) subunits FY, PAPS2, CSTF50, CPSF30, CPSF73-I, CPSF73-II and CPSF160.

The protein resides in the nucleus. Its subcellular location is the cytoplasm. Functionally, CPSF plays a key role in pre-mRNA 3'-end formation, recognizing the AAUAAA signal sequence and interacting with poly(A)polymerase and other factors to bring about cleavage and poly(A) addition. Required for antisense-RNA-mediated gene silencing. This is Cleavage and polyadenylation specificity factor subunit 2 (CPSF100) from Arabidopsis thaliana (Mouse-ear cress).